Reading from the N-terminus, the 300-residue chain is MSAINTLPPIKSIFNDFKEITKAGLAISVVFSSLAGYLLGIHEFNLETIYVLLMLAIGGYCMVGASNAYNQIIEKDLDTLMNRTKNRPIPSGRMSVNTAFTIATILTITGLTILYMINPKTAMFGAISIFLYTCVYTPLKTVTSLSVFVGAFPGAIPFMLGWVAATNDFGIEAGTLFLIQFFWQFPHFWAIGWFLFEDYKKGGFYMLPTGKRDKGTAMQIVLYTLWLTAASILPSFGYTGRLYLTPVSAIIVVLLGLWMLVYAIKLYKNKTDKSAKTLMLVSVAYISLIQVVYILDKFLR.

Helical transmembrane passes span 24 to 44 (GLAISVVFSSLAGYLLGIHEF), 46 to 66 (LETIYVLLMLAIGGYCMVGAS), 99 to 119 (AFTIATILTITGLTILYMINP), 122 to 142 (AMFGAISIFLYTCVYTPLKTV), 145 to 165 (LSVFVGAFPGAIPFMLGWVAA), 176 to 196 (LFLIQFFWQFPHFWAIGWFLF), 220 to 240 (IVLYTLWLTAASILPSFGYTG), 244 to 264 (LTPVSAIIVVLLGLWMLVYAI), and 275 to 295 (AKTLMLVSVAYISLIQVVYIL).

The protein belongs to the UbiA prenyltransferase family. Protoheme IX farnesyltransferase subfamily.

It is found in the cell inner membrane. It carries out the reaction heme b + (2E,6E)-farnesyl diphosphate + H2O = Fe(II)-heme o + diphosphate. It functions in the pathway porphyrin-containing compound metabolism; heme O biosynthesis; heme O from protoheme: step 1/1. Its function is as follows. Converts heme B (protoheme IX) to heme O by substitution of the vinyl group on carbon 2 of heme B porphyrin ring with a hydroxyethyl farnesyl side group. This chain is Protoheme IX farnesyltransferase, found in Flavobacterium psychrophilum (strain ATCC 49511 / DSM 21280 / CIP 103535 / JIP02/86).